Here is a 463-residue protein sequence, read N- to C-terminus: Glutamate--tRNA ligase 1 (463 aa).

A 'HIGH' region motif is present at residues 10–20 (PSPTGYLHIGG). The 'KMSKS' region motif lies at 238–242 (KLSKR). K241 contributes to the ATP binding site.

Belongs to the class-I aminoacyl-tRNA synthetase family. Glutamate--tRNA ligase type 1 subfamily. As to quaternary structure, monomer.

Its subcellular location is the cytoplasm. The enzyme catalyses tRNA(Glu) + L-glutamate + ATP = L-glutamyl-tRNA(Glu) + AMP + diphosphate. Functionally, catalyzes the attachment of glutamate to tRNA(Glu) in a two-step reaction: glutamate is first activated by ATP to form Glu-AMP and then transferred to the acceptor end of tRNA(Glu). In Helicobacter pylori (strain Shi470), this protein is Glutamate--tRNA ligase 1.